Here is a 384-residue protein sequence, read N- to C-terminus: Prostaglandin E synthase 2 (384 aa).

Residues 1–56 (MAQAARLSWVLVSSRCALTEGLLTRPWQPLSAQSRAGFTRVAAGSRGAAVRKGSPR) lie on the Lumenal side of the membrane. Residues 57 to 73 (LLGAAALALGGALGLYH) form a helical membrane-spanning segment. The Cytoplasmic segment spans residues 74–384 (TVRWHQRSQD…VHHVNPSCKD (311 aa)). The region spanning 89–192 (SAAQLPLSNS…EVITYYPPMK (104 aa)) is the Glutaredoxin domain. Residues Val147 and 163 to 164 (DS) contribute to the glutathione site. Positions 262 to 376 (YIVREGKFGA…RAIEEAPSVH (115 aa)) constitute a GST C-terminal domain.

This sequence belongs to the GST superfamily. Homodimer. Interacts with EXOSC10. May interact with CEBPB. Synthesized as a Golgi membrane-associated protein, and the proteolytic removal of the N-terminal hydrophobic domain leads to the formation of a mature cytosolic enzyme. As to expression, widely expressed. Expressed in brain, heart, liver, colon and lung.

It is found in the golgi apparatus membrane. The protein resides in the nucleus. Its subcellular location is the cytoplasm. It carries out the reaction prostaglandin H2 = prostaglandin E2. It catalyses the reaction prostaglandin H2 = (12S)-hydroxy-(5Z,8E,10E)-heptadecatrienoate + malonaldehyde. Its pathway is lipid metabolism; prostaglandin biosynthesis. Isomerase activity is increased by sulfhydril compounds. Dithiothreitol (DTT) is most effective, followed by glutathione (GSH) and 2-mercaptoethanol. In terms of biological role, isomerase that catalyzes the conversion of PGH2 into the more stable prostaglandin E2 (PGE2) (in vitro). The biological function and the GSH-dependent property of PTGES2 is still under debate. In vivo, PTGES2 could form a complex with GSH and heme and would not participate in PGE2 synthesis but would catalyze the degradation of prostaglandin E2 H2 (PGH2) to 12(S)-hydroxy-5(Z),8(E),10(E)-heptadecatrienoic acid (HHT) and malondialdehyde (MDA). May also have transactivation activity toward IFN-gamma (IFNG), possibly via an interaction with CEBPB; however, the relevance of transcription activation activity remains unclear. The polypeptide is Prostaglandin E synthase 2 (Ptges2) (Mus musculus (Mouse)).